A 638-amino-acid chain; its full sequence is Terrein cluster-specific transcription factor terR (638 aa).

A DNA-binding region (zn(2)-C6 fungal-type) is located at residues Cys50–Cys76.

The protein localises to the nucleus. Transcription factor that regulates specifically the terrein biosynthesis gene cluster. Recognizes CGG direct repeat consensus sequences in the terrein cluster forming the high affinity consensus motif TCGGHHWYHCGGH. The polypeptide is Terrein cluster-specific transcription factor terR (Aspergillus terreus (strain NIH 2624 / FGSC A1156)).